The primary structure comprises 122 residues: Large ribosomal subunit protein uL29A (122 aa).

The stretch at 10–69 (QLGIKQIEERAAEIKADLAALRQKKNSGDVGANDIKTAKKNLARALTVRREKILEELVEA) forms a coiled coil.

It belongs to the universal ribosomal protein uL29 family. In terms of assembly, component of the large ribosomal subunit.

It localises to the cytoplasm. The sequence is that of Large ribosomal subunit protein uL29A (RPL35A) from Encephalitozoon cuniculi (strain GB-M1) (Microsporidian parasite).